Consider the following 264-residue polypeptide: Thymidylate synthase (264 aa).

Arginine 21 serves as a coordination point for dUMP. A (6R)-5,10-methylene-5,6,7,8-tetrahydrofolate-binding site is contributed by histidine 51. Arginine 126–arginine 127 lines the dUMP pocket. The active-site Nucleophile is cysteine 146. Residues arginine 166–aspartate 169, asparagine 177, and histidine 207–tyrosine 209 contribute to the dUMP site. Aspartate 169 is a binding site for (6R)-5,10-methylene-5,6,7,8-tetrahydrofolate. Alanine 263 serves as a coordination point for (6R)-5,10-methylene-5,6,7,8-tetrahydrofolate.

The protein belongs to the thymidylate synthase family. Bacterial-type ThyA subfamily. Homodimer.

The protein localises to the cytoplasm. It carries out the reaction dUMP + (6R)-5,10-methylene-5,6,7,8-tetrahydrofolate = 7,8-dihydrofolate + dTMP. It functions in the pathway pyrimidine metabolism; dTTP biosynthesis. Its function is as follows. Catalyzes the reductive methylation of 2'-deoxyuridine-5'-monophosphate (dUMP) to 2'-deoxythymidine-5'-monophosphate (dTMP) while utilizing 5,10-methylenetetrahydrofolate (mTHF) as the methyl donor and reductant in the reaction, yielding dihydrofolate (DHF) as a by-product. This enzymatic reaction provides an intracellular de novo source of dTMP, an essential precursor for DNA biosynthesis. This is Thymidylate synthase from Escherichia coli (strain 55989 / EAEC).